The following is a 440-amino-acid chain: Transposon Ty1-DR3 Gag polyprotein (440 aa).

Polar residues-rich tracts occupy residues M1–P10, T48–S60, and Q127–F152. Disordered stretches follow at residues M1–Q93, P126–P173, and G352–Y440. Residues T153–T165 show a composition bias toward low complexity. The segment at N299–H401 is RNA-binding. A compositionally biased stretch (polar residues) spans N402–N428. S416 is modified (phosphoserine). A compositionally biased stretch (basic and acidic residues) spans N429–Y440.

Homotrimer.

The protein localises to the cytoplasm. Its function is as follows. Capsid protein (CA) is the structural component of the virus-like particle (VLP), forming the shell that encapsulates the retrotransposons dimeric RNA genome. The particles are assembled from trimer-clustered units and there are holes in the capsid shells that allow for the diffusion of macromolecules. CA also has nucleocapsid-like chaperone activity, promoting primer tRNA(i)-Met annealing to the multipartite primer-binding site (PBS), dimerization of Ty1 RNA and initiation of reverse transcription. The chain is Transposon Ty1-DR3 Gag polyprotein (TY1A-DR3) from Saccharomyces cerevisiae (strain ATCC 204508 / S288c) (Baker's yeast).